Reading from the N-terminus, the 446-residue chain is Exodeoxyribonuclease 7 large subunit (446 aa).

Belongs to the XseA family. In terms of assembly, heterooligomer composed of large and small subunits.

It is found in the cytoplasm. It catalyses the reaction Exonucleolytic cleavage in either 5'- to 3'- or 3'- to 5'-direction to yield nucleoside 5'-phosphates.. Functionally, bidirectionally degrades single-stranded DNA into large acid-insoluble oligonucleotides, which are then degraded further into small acid-soluble oligonucleotides. In Streptococcus thermophilus (strain CNRZ 1066), this protein is Exodeoxyribonuclease 7 large subunit.